The primary structure comprises 688 residues: Phosphoinositide 3-phosphatase (688 aa).

Residues Ser155–Tyr637 enclose the Myotubularin phosphatase domain. The Phosphocysteine intermediate role is filled by Cys397. Positions Glu647–Asn668 are enriched in basic and acidic residues. The segment at Glu647–Gly672 is disordered.

Belongs to the protein-tyrosine phosphatase family. Non-receptor class myotubularin subfamily.

Its subcellular location is the cytoplasm. The catalysed reaction is a 1,2-diacyl-sn-glycero-3-phospho-(1D-myo-inositol-3-phosphate) + H2O = a 1,2-diacyl-sn-glycero-3-phospho-(1D-myo-inositol) + phosphate. Functionally, lipid phosphatase which dephosphorylates phosphatidylinositol 3-monophosphate (PI3P). Involved in the control of PI3P-dependent signaling and in the maintenance of endosomal system integrity. The chain is Phosphoinositide 3-phosphatase from Saccharomyces cerevisiae (strain ATCC 204508 / S288c) (Baker's yeast).